The primary structure comprises 485 residues: UDP-N-acetylmuramoyl-L-alanyl-D-glutamate--2,6-diaminopimelate ligase (485 aa).

S32 serves as a coordination point for UDP-N-acetyl-alpha-D-muramoyl-L-alanyl-D-glutamate. G111–T117 is a binding site for ATP. UDP-N-acetyl-alpha-D-muramoyl-L-alanyl-D-glutamate contacts are provided by residues T153–T154, S180, and R188. At K220 the chain carries N6-carboxylysine. Meso-2,6-diaminopimelate is bound by residues R382, D405–R408, G455, and E459. Positions D405–R408 match the Meso-diaminopimelate recognition motif motif.

Belongs to the MurCDEF family. MurE subfamily. Mg(2+) serves as cofactor. In terms of processing, carboxylation is probably crucial for Mg(2+) binding and, consequently, for the gamma-phosphate positioning of ATP.

The protein resides in the cytoplasm. The catalysed reaction is UDP-N-acetyl-alpha-D-muramoyl-L-alanyl-D-glutamate + meso-2,6-diaminopimelate + ATP = UDP-N-acetyl-alpha-D-muramoyl-L-alanyl-gamma-D-glutamyl-meso-2,6-diaminopimelate + ADP + phosphate + H(+). The protein operates within cell wall biogenesis; peptidoglycan biosynthesis. In terms of biological role, catalyzes the addition of meso-diaminopimelic acid to the nucleotide precursor UDP-N-acetylmuramoyl-L-alanyl-D-glutamate (UMAG) in the biosynthesis of bacterial cell-wall peptidoglycan. The sequence is that of UDP-N-acetylmuramoyl-L-alanyl-D-glutamate--2,6-diaminopimelate ligase from Chlamydia felis (strain Fe/C-56) (Chlamydophila felis).